A 201-amino-acid polypeptide reads, in one-letter code: GTP cyclohydrolase 1 (201 aa).

Residues Cys90, His93, and Cys163 each coordinate Zn(2+).

It belongs to the GTP cyclohydrolase I family. In terms of assembly, homomer.

The catalysed reaction is GTP + H2O = 7,8-dihydroneopterin 3'-triphosphate + formate + H(+). It functions in the pathway cofactor biosynthesis; 7,8-dihydroneopterin triphosphate biosynthesis; 7,8-dihydroneopterin triphosphate from GTP: step 1/1. The polypeptide is GTP cyclohydrolase 1 (Streptomyces griseus subsp. griseus (strain JCM 4626 / CBS 651.72 / NBRC 13350 / KCC S-0626 / ISP 5235)).